A 270-amino-acid chain; its full sequence is Orotidine 5'-phosphate decarboxylase (270 aa).

Residue lysine 95 is the Proton donor of the active site.

Belongs to the OMP decarboxylase family. Type 2 subfamily.

The enzyme catalyses orotidine 5'-phosphate + H(+) = UMP + CO2. The protein operates within pyrimidine metabolism; UMP biosynthesis via de novo pathway; UMP from orotate: step 2/2. This chain is Orotidine 5'-phosphate decarboxylase, found in Azoarcus sp. (strain BH72).